Consider the following 839-residue polypeptide: Probable beta-glucosidase I (839 aa).

An N-linked (GlcNAc...) asparagine glycan is attached at Asn-197. Residue Asp-225 is part of the active site. The region spanning 395–555 is the PA14 domain; that stretch reads DGKTGFSFKV…GQEELISNAV (161 aa). The N-linked (GlcNAc...) asparagine glycan is linked to Asn-620.

Belongs to the glycosyl hydrolase 3 family.

It localises to the secreted. The enzyme catalyses Hydrolysis of terminal, non-reducing beta-D-glucosyl residues with release of beta-D-glucose.. It participates in glycan metabolism; cellulose degradation. In terms of biological role, beta-glucosidases are one of a number of cellulolytic enzymes involved in the degradation of cellulosic biomass. Catalyzes the last step releasing glucose from the inhibitory cellobiose. The polypeptide is Probable beta-glucosidase I (bglI) (Aspergillus oryzae (strain ATCC 42149 / RIB 40) (Yellow koji mold)).